The chain runs to 535 residues: Beta-hexosaminidase 3 (535 aa).

The N-terminal stretch at 1 to 24 (MRGSGAKIAGVLPLFMLFIAGTIS) is a signal peptide. N-linked (GlcNAc...) asparagine glycosylation occurs at asparagine 92. A disulfide bridge links cysteine 292 with cysteine 334. Residue glutamate 329 is the Proton donor of the active site. N-linked (GlcNAc...) asparagine glycans are attached at residues asparagine 331, asparagine 405, asparagine 441, and asparagine 496. A disulfide bridge links cysteine 506 with cysteine 532.

This sequence belongs to the glycosyl hydrolase 20 family. N-glycosylated. As to expression, expressed in roots, leaves, stems, flowers and siliques.

Its subcellular location is the cell membrane. It catalyses the reaction Hydrolysis of terminal non-reducing N-acetyl-D-hexosamine residues in N-acetyl-beta-D-hexosaminides.. Slightly inhibited by N-acetylcastanospermine. Functionally, has a broad substrate specificity. Can use synthetic substrates such as pyridylaminated chitotriose, p-nitrophenyl-beta-N-acetylglucosaminide, p-nitrophenyl-2-acetamido-2-deoxy-beta-D-glucopyranoside (pNP-GlcNAc), p-nitrophenyl-2-acetamido-2-deoxy-beta-D-galactopyranoside (pNP-GalNAc), 4-methylumbelliferyl-2-acetamido-2-deoxy-beta-D-glucopyranoside (MU-GlcNAc), and 4-methylumbelliferyl-6-sulfo-2-acetamido-2-deoxy-beta-D-glucopyranoside (MU-GlcNAc-6SO(4)) as substrates. Removes terminal GlcNAc residues from alpha1,3- and alpha1,6-mannosyl branches of biantennary N-glycans without any strict branch preference. Required for the presence of paucimannosidic N-glycans in glycoproteins of roots and leaves. The chain is Beta-hexosaminidase 3 (HEXO3) from Arabidopsis thaliana (Mouse-ear cress).